We begin with the raw amino-acid sequence, 911 residues long: Protein translocase subunit SecA (911 aa).

ATP is bound by residues Q87, 105 to 109 (GEGKT), and D512. A disordered region spans residues 861–880 (APGLGSEQLSEEGAEVAVAS). Residues C895, C897, C906, and H907 each contribute to the Zn(2+) site.

The protein belongs to the SecA family. As to quaternary structure, monomer and homodimer. Part of the essential Sec protein translocation apparatus which comprises SecA, SecYEG and auxiliary proteins SecDF-YajC and YidC. It depends on Zn(2+) as a cofactor.

The protein resides in the cell inner membrane. It localises to the cytoplasm. It catalyses the reaction ATP + H2O + cellular proteinSide 1 = ADP + phosphate + cellular proteinSide 2.. Its function is as follows. Part of the Sec protein translocase complex. Interacts with the SecYEG preprotein conducting channel. Has a central role in coupling the hydrolysis of ATP to the transfer of proteins into and across the cell membrane, serving both as a receptor for the preprotein-SecB complex and as an ATP-driven molecular motor driving the stepwise translocation of polypeptide chains across the membrane. This chain is Protein translocase subunit SecA, found in Pseudomonas putida (strain ATCC 47054 / DSM 6125 / CFBP 8728 / NCIMB 11950 / KT2440).